The chain runs to 146 residues: Tol-Pal system protein TolR (146 aa).

The helical transmembrane segment at 16–36 (VVPYIDVMLVLLVIFMVTAPM) threads the bilayer.

The protein belongs to the ExbD/TolR family. As to quaternary structure, the Tol-Pal system is composed of five core proteins: the inner membrane proteins TolA, TolQ and TolR, the periplasmic protein TolB and the outer membrane protein Pal. They form a network linking the inner and outer membranes and the peptidoglycan layer.

The protein localises to the cell inner membrane. Its function is as follows. Part of the Tol-Pal system, which plays a role in outer membrane invagination during cell division and is important for maintaining outer membrane integrity. This chain is Tol-Pal system protein TolR, found in Pseudomonas aeruginosa (strain ATCC 15692 / DSM 22644 / CIP 104116 / JCM 14847 / LMG 12228 / 1C / PRS 101 / PAO1).